Consider the following 468-residue polypeptide: 3-isopropylmalate dehydratase large subunit (468 aa).

Positions 349, 409, and 412 each coordinate [4Fe-4S] cluster.

Belongs to the aconitase/IPM isomerase family. LeuC type 1 subfamily. Heterodimer of LeuC and LeuD. It depends on [4Fe-4S] cluster as a cofactor.

The enzyme catalyses (2R,3S)-3-isopropylmalate = (2S)-2-isopropylmalate. The protein operates within amino-acid biosynthesis; L-leucine biosynthesis; L-leucine from 3-methyl-2-oxobutanoate: step 2/4. Catalyzes the isomerization between 2-isopropylmalate and 3-isopropylmalate, via the formation of 2-isopropylmaleate. The protein is 3-isopropylmalate dehydratase large subunit of Jannaschia sp. (strain CCS1).